The chain runs to 157 residues: Endoribonuclease YbeY (157 aa).

Zn(2+) is bound by residues His-116, His-120, and His-126.

It belongs to the endoribonuclease YbeY family. Requires Zn(2+) as cofactor.

Its subcellular location is the cytoplasm. Functionally, single strand-specific metallo-endoribonuclease involved in late-stage 70S ribosome quality control and in maturation of the 3' terminus of the 16S rRNA. This is Endoribonuclease YbeY from Pseudarthrobacter chlorophenolicus (strain ATCC 700700 / DSM 12829 / CIP 107037 / JCM 12360 / KCTC 9906 / NCIMB 13794 / A6) (Arthrobacter chlorophenolicus).